Reading from the N-terminus, the 297-residue chain is Alpha-tubulin N-acetyltransferase 1 (297 aa).

Positions 1–184 constitute an N-acetyltransferase domain; that stretch reads MDFPYDLNAL…NNFVVFAGFF (184 aa). Residues 118–131 and 154–163 contribute to the acetyl-CoA site; these read FYVTETLQRHGYGS and SPKFLSFLEK. The tract at residues 226 to 297 is disordered; the sequence is FVRPGGPPHS…SLNRSRLSFH (72 aa). Pro residues predominate over residues 230–240; the sequence is GGPPHSPPLLP. Positions 241–264 are enriched in low complexity; the sequence is SSPQSRSLSVGSSPSRAPLRPAAA. Polar residues-rich tracts occupy residues 266-278 and 286-297; these read VLQQGQTPSSPLN and TSSLNRSRLSFH.

The protein belongs to the acetyltransferase ATAT1 family. As to quaternary structure, monomer.

The protein localises to the cytoplasm. It is found in the membrane. It localises to the clathrin-coated pit. The protein resides in the cell junction. Its subcellular location is the focal adhesion. The protein localises to the cell projection. It is found in the axon. It localises to the cytoskeleton. The protein resides in the spindle. It carries out the reaction L-lysyl-[alpha-tubulin] + acetyl-CoA = N(6)-acetyl-L-lysyl-[alpha-tubulin] + CoA + H(+). Its function is as follows. Specifically acetylates 'Lys-40' in alpha-tubulin on the lumenal side of microtubules. Promotes microtubule destabilization and accelerates microtubule dynamics; this activity may be independent of acetylation activity. Acetylates alpha-tubulin with a slow enzymatic rate, due to a catalytic site that is not optimized for acetyl transfer. Enters the microtubule through each end and diffuses quickly throughout the lumen of microtubules. Acetylates only long/old microtubules because of its slow acetylation rate since it does not have time to act on dynamically unstable microtubules before the enzyme is released. May be involved in neuron development. Acetylates alpha-tubulin in neurons, but not in cilia. This chain is Alpha-tubulin N-acetyltransferase 1, found in Danio rerio (Zebrafish).